The primary structure comprises 350 residues: Holliday junction branch migration complex subunit RuvB (350 aa).

A large ATPase domain (RuvB-L) region spans residues 1–182 (MEDRIVTPLN…FGVLCPMDFY (182 aa)). ATP contacts are provided by residues L21, R22, G63, K66, T67, T68, 129–131 (EDY), R172, Y182, and R219. T67 lines the Mg(2+) pocket. The segment at 183–253 (DQEELSEIVV…TSKAALELLE (71 aa)) is small ATPAse domain (RuvB-S). Residues 256-350 (KEGFDSIDNK…KQSSLFDGEV (95 aa)) form a head domain (RuvB-H) region. The DNA site is built by R311 and R316.

This sequence belongs to the RuvB family. As to quaternary structure, homohexamer. Forms an RuvA(8)-RuvB(12)-Holliday junction (HJ) complex. HJ DNA is sandwiched between 2 RuvA tetramers; dsDNA enters through RuvA and exits via RuvB. An RuvB hexamer assembles on each DNA strand where it exits the tetramer. Each RuvB hexamer is contacted by two RuvA subunits (via domain III) on 2 adjacent RuvB subunits; this complex drives branch migration. In the full resolvosome a probable DNA-RuvA(4)-RuvB(12)-RuvC(2) complex forms which resolves the HJ.

It is found in the cytoplasm. The enzyme catalyses ATP + H2O = ADP + phosphate + H(+). The RuvA-RuvB-RuvC complex processes Holliday junction (HJ) DNA during genetic recombination and DNA repair, while the RuvA-RuvB complex plays an important role in the rescue of blocked DNA replication forks via replication fork reversal (RFR). RuvA specifically binds to HJ cruciform DNA, conferring on it an open structure. The RuvB hexamer acts as an ATP-dependent pump, pulling dsDNA into and through the RuvAB complex. RuvB forms 2 homohexamers on either side of HJ DNA bound by 1 or 2 RuvA tetramers; 4 subunits per hexamer contact DNA at a time. Coordinated motions by a converter formed by DNA-disengaged RuvB subunits stimulates ATP hydrolysis and nucleotide exchange. Immobilization of the converter enables RuvB to convert the ATP-contained energy into a lever motion, pulling 2 nucleotides of DNA out of the RuvA tetramer per ATP hydrolyzed, thus driving DNA branch migration. The RuvB motors rotate together with the DNA substrate, which together with the progressing nucleotide cycle form the mechanistic basis for DNA recombination by continuous HJ branch migration. Branch migration allows RuvC to scan DNA until it finds its consensus sequence, where it cleaves and resolves cruciform DNA. The chain is Holliday junction branch migration complex subunit RuvB from Clostridium kluyveri (strain NBRC 12016).